A 151-amino-acid polypeptide reads, in one-letter code: Ribonuclease H (151 aa).

In terms of domain architecture, RNase H type-1 spans 1–143 (MEEYVIYTDG…VDRVARKEAA (143 aa)). Mg(2+)-binding residues include D9, E48, D71, and D135.

The protein belongs to the RNase H family. As to quaternary structure, monomer. Requires Mg(2+) as cofactor.

Its subcellular location is the cytoplasm. It carries out the reaction Endonucleolytic cleavage to 5'-phosphomonoester.. Endonuclease that specifically degrades the RNA of RNA-DNA hybrids. The protein is Ribonuclease H of Neorickettsia sennetsu (strain ATCC VR-367 / Miyayama) (Ehrlichia sennetsu).